Consider the following 137-residue polypeptide: Large ribosomal subunit protein uL16 (137 aa).

Belongs to the universal ribosomal protein uL16 family. As to quaternary structure, part of the 50S ribosomal subunit.

Its function is as follows. Binds 23S rRNA and is also seen to make contacts with the A and possibly P site tRNAs. The protein is Large ribosomal subunit protein uL16 of Marinomonas sp. (strain MWYL1).